The sequence spans 103 residues: Acylphosphatase-2 (103 aa).

Serine 2 bears the N-acetylserine mark. Residues 13 to 103 (SVDYEVFGRV…LDFSGFSTRY (91 aa)) form the Acylphosphatase-like domain. At cysteine 26 the chain carries S-glutathionyl cysteine; alternate. Active-site residues include arginine 28 and asparagine 46.

The protein belongs to the acylphosphatase family. Monomer (TU1) or homodimer (TU3) in absence of reducing factors; disulfide linked.

It catalyses the reaction an acyl phosphate + H2O = a carboxylate + phosphate + H(+). Its function is as follows. Its physiological role is not yet clear. This chain is Acylphosphatase-2 (ACYP2), found in Meleagris gallopavo (Wild turkey).